A 392-amino-acid chain; its full sequence is Phospho-N-acetylmuramoyl-pentapeptide-transferase (392 aa).

The next 10 membrane-spanning stretches (helical) occupy residues Ala-29–Arg-49, Thr-76–Leu-96, Phe-100–Trp-120, Tyr-137–Glu-157, Ile-193–Ser-213, Gly-225–Thr-245, Ser-262–Phe-282, Val-289–Ile-309, Ile-314–Val-334, and Gln-369–Leu-389.

Belongs to the glycosyltransferase 4 family. MraY subfamily. Requires Mg(2+) as cofactor.

It is found in the cell inner membrane. The enzyme catalyses UDP-N-acetyl-alpha-D-muramoyl-L-alanyl-gamma-D-glutamyl-meso-2,6-diaminopimeloyl-D-alanyl-D-alanine + di-trans,octa-cis-undecaprenyl phosphate = di-trans,octa-cis-undecaprenyl diphospho-N-acetyl-alpha-D-muramoyl-L-alanyl-D-glutamyl-meso-2,6-diaminopimeloyl-D-alanyl-D-alanine + UMP. It functions in the pathway cell wall biogenesis; peptidoglycan biosynthesis. Functionally, catalyzes the initial step of the lipid cycle reactions in the biosynthesis of the cell wall peptidoglycan: transfers peptidoglycan precursor phospho-MurNAc-pentapeptide from UDP-MurNAc-pentapeptide onto the lipid carrier undecaprenyl phosphate, yielding undecaprenyl-pyrophosphoryl-MurNAc-pentapeptide, known as lipid I. The protein is Phospho-N-acetylmuramoyl-pentapeptide-transferase of Polaromonas sp. (strain JS666 / ATCC BAA-500).